The sequence spans 252 residues: 14-3-3-like protein GF14 omicron (252 aa).

Residues serine 65 and serine 188 each carry the phosphoserine modification.

This sequence belongs to the 14-3-3 family.

The protein localises to the nucleus. Its subcellular location is the cytoplasm. Its function is as follows. Is associated with a DNA binding complex that binds to the G box, a well-characterized cis-acting DNA regulatory element found in plant genes. The protein is 14-3-3-like protein GF14 omicron (GRF11) of Arabidopsis thaliana (Mouse-ear cress).